The sequence spans 243 residues: DNA repair protein RecO (243 aa).

It belongs to the RecO family.

Functionally, involved in DNA repair and RecF pathway recombination. This is DNA repair protein RecO from Azoarcus sp. (strain BH72).